A 342-amino-acid polypeptide reads, in one-letter code: DNA primase small subunit PriS (342 aa).

Active-site residues include D97, D99, and D236.

This sequence belongs to the eukaryotic-type primase small subunit family. As to quaternary structure, heterodimer of a small subunit (PriS) and a large subunit (PriL). Mg(2+) serves as cofactor. Mn(2+) is required as a cofactor.

Its function is as follows. Catalytic subunit of DNA primase, an RNA polymerase that catalyzes the synthesis of short RNA molecules used as primers for DNA polymerase during DNA replication. The small subunit contains the primase catalytic core and has DNA synthesis activity on its own. Binding to the large subunit stabilizes and modulates the activity, increasing the rate of DNA synthesis while decreasing the length of the DNA fragments, and conferring RNA synthesis capability. The DNA polymerase activity may enable DNA primase to also catalyze primer extension after primer synthesis. May also play a role in DNA repair. The chain is DNA primase small subunit PriS from Aeropyrum pernix (strain ATCC 700893 / DSM 11879 / JCM 9820 / NBRC 100138 / K1).